A 129-amino-acid polypeptide reads, in one-letter code: Small ribosomal subunit protein uS11 (129 aa).

The protein belongs to the universal ribosomal protein uS11 family. As to quaternary structure, part of the 30S ribosomal subunit. Interacts with proteins S7 and S18. Binds to IF-3.

Functionally, located on the platform of the 30S subunit, it bridges several disparate RNA helices of the 16S rRNA. Forms part of the Shine-Dalgarno cleft in the 70S ribosome. The protein is Small ribosomal subunit protein uS11 of Bradyrhizobium sp. (strain BTAi1 / ATCC BAA-1182).